A 466-amino-acid polypeptide reads, in one-letter code: Soluble pyridine nucleotide transhydrogenase (466 aa).

36–45 (ERYQNVGGGC) is an FAD binding site.

This sequence belongs to the class-I pyridine nucleotide-disulfide oxidoreductase family. In terms of assembly, homooligomer; probable homooctamer. FAD serves as cofactor.

The protein localises to the cytoplasm. It carries out the reaction NAD(+) + NADPH = NADH + NADP(+). Conversion of NADPH, generated by peripheral catabolic pathways, to NADH, which can enter the respiratory chain for energy generation. This Shigella flexneri protein is Soluble pyridine nucleotide transhydrogenase.